The primary structure comprises 88 residues: Small ribosomal subunit protein uS17 (88 aa).

The protein belongs to the universal ribosomal protein uS17 family. As to quaternary structure, part of the 30S ribosomal subunit.

Functionally, one of the primary rRNA binding proteins, it binds specifically to the 5'-end of 16S ribosomal RNA. This Xylella fastidiosa (strain M23) protein is Small ribosomal subunit protein uS17.